We begin with the raw amino-acid sequence, 589 residues long: MLPEPVSCPDWLIAQEAEKRMKSIFQLAEELDIKKEELIPYGSYIAKIDYRKLYSRIKNNPNGKYIIVTAITPTPFGEGKSTTTIGLTQGLGKRGKKVSCAIRQPSAGPLMNIKGSAAGGGLSQCIPRTEFSLGFTGDINAVMNAHNLAMVALTSRMLHEANYSDEILKKRGLRRLDIDPKRVQMGWVIDFCVQALRKIVIGLGGKKDGITMESRFDIATSSELMAILSLVKDLKELKKRISSIVVAYSKTGNPITTEDLEVSGAMSALMLPAFNPNLIQTIEGQPVFVHAAPFANIAIGQSSIIADMVGLKLNEYHVTECGFGADIGFEKFWNIKCRTSGLKPDVAVLVATLRALKYHGADKDSPKIIPGNPLPKEYIEKNMQWLERGMKNLFHHIKIIKKSGLSIVVCINKFQSDTHEELDFVRKFCEEMGIPVAISEHWQKGGQGALELADFVIDACKNNSNFNFLYENSLPHISRIELIAREIYGADSVEFSPLALEKLQSINSKKEFSDFAICIAKTHLSLSDNPLLRGVPEGWQLFIRDILVFYGAKLIVPVAGEISLMPGTASTPNFRTIDVDLQTGKVTGI.

74–81 (TPFGEGKS) provides a ligand contact to ATP.

The protein belongs to the formate--tetrahydrofolate ligase family.

It carries out the reaction (6S)-5,6,7,8-tetrahydrofolate + formate + ATP = (6R)-10-formyltetrahydrofolate + ADP + phosphate. It functions in the pathway one-carbon metabolism; tetrahydrofolate interconversion. The chain is Formate--tetrahydrofolate ligase from Thermodesulfovibrio yellowstonii (strain ATCC 51303 / DSM 11347 / YP87).